Reading from the N-terminus, the 919-residue chain is Probable dipeptidyl-aminopeptidase B (919 aa).

Over residues 1 to 10 (MRPSDDHGET) the composition is skewed to basic and acidic residues. The disordered stretch occupies residues 1 to 50 (MRPSDDHGETSEFLPITRSRSVSAASQTSTDSSLSTESLFPGEQKPFPNV). The Cytoplasmic segment spans residues 1-92 (MRPSDDHGET…AATGGGRARR (92 aa)). A compositionally biased stretch (low complexity) spans 21 to 38 (SVSAASQTSTDSSLSTES). The helical; Signal-anchor for type II membrane protein transmembrane segment at 93 to 113 (IFWILVLLCLGGWLLAFALFL) threads the bilayer. The Vacuolar segment spans residues 114 to 919 (TGGRANYQTA…MKRSLPLLYP (806 aa)). N-linked (GlcNAc...) asparagine glycosylation is found at asparagine 200, asparagine 352, and asparagine 643. Residue serine 757 is the Charge relay system of the active site. The N-linked (GlcNAc...) asparagine glycan is linked to asparagine 811. Residues aspartate 834 and histidine 867 each act as charge relay system in the active site.

Belongs to the peptidase S9B family.

The protein localises to the vacuole membrane. It catalyses the reaction Release of an N-terminal dipeptide, Xaa-Yaa-|-Zaa-, from a polypeptide, preferentially when Yaa is Pro, provided Zaa is neither Pro nor hydroxyproline.. Type IV dipeptidyl-peptidase which removes N-terminal dipeptides sequentially from polypeptides having unsubstituted N-termini provided that the penultimate residue is proline. In Neosartorya fischeri (strain ATCC 1020 / DSM 3700 / CBS 544.65 / FGSC A1164 / JCM 1740 / NRRL 181 / WB 181) (Aspergillus fischerianus), this protein is Probable dipeptidyl-aminopeptidase B (dapB).